Reading from the N-terminus, the 219-residue chain is uncharacterized protein (219 aa).

The residue at position 23 (serine 23) is a Phosphoserine. Residue lysine 137 forms a Glycyl lysine isopeptide (Lys-Gly) (interchain with G-Cter in SUMO) linkage.

Its subcellular location is the cytoplasm. This is an uncharacterized protein from Saccharomyces cerevisiae (strain ATCC 204508 / S288c) (Baker's yeast).